Reading from the N-terminus, the 417-residue chain is Gamma-glutamyl phosphate reductase (417 aa).

Belongs to the gamma-glutamyl phosphate reductase family.

Its subcellular location is the cytoplasm. It carries out the reaction L-glutamate 5-semialdehyde + phosphate + NADP(+) = L-glutamyl 5-phosphate + NADPH + H(+). The protein operates within amino-acid biosynthesis; L-proline biosynthesis; L-glutamate 5-semialdehyde from L-glutamate: step 2/2. Its function is as follows. Catalyzes the NADPH-dependent reduction of L-glutamate 5-phosphate into L-glutamate 5-semialdehyde and phosphate. The product spontaneously undergoes cyclization to form 1-pyrroline-5-carboxylate. The polypeptide is Gamma-glutamyl phosphate reductase (Meiothermus ruber).